A 42-amino-acid polypeptide reads, in one-letter code: Photosystem I reaction center subunit IX (42 aa).

The helical transmembrane segment at 7–27 threads the bilayer; the sequence is FLSTAPVLIMALLTFTAGLLI.

It belongs to the PsaJ family.

It localises to the cellular thylakoid membrane. Functionally, may help in the organization of the PsaE and PsaF subunits. In Rippkaea orientalis (strain PCC 8801 / RF-1) (Cyanothece sp. (strain PCC 8801)), this protein is Photosystem I reaction center subunit IX.